Here is a 404-residue protein sequence, read N- to C-terminus: Demethylphylloquinone reductase NdbB (404 aa).

7–43 (RICILGGGFGGLYTALRLGQLSWEGHTPPEIVLVDQR) is a binding site for FAD. 159-195 (IRIAIVGGGYSGVELAAKLGDRLGERGRIRIIERGKE) serves as a coordination point for NADP(+).

This sequence belongs to the NADH dehydrogenase family. The cofactor is FAD.

It carries out the reaction demethylphylloquinone + NADPH + H(+) = demethylphylloquinol + NADP(+). The protein operates within cofactor biosynthesis; phylloquinone biosynthesis. With respect to regulation, inhibited by dicumarol. In terms of biological role, bifunctional oxidoreductase probably ables to act both on prenyl naphthoquinones and on prenyl benzoquinones. Catalyzes the penultimate step in the biosynthesis of vitamin K1. The chain is Demethylphylloquinone reductase NdbB from Synechocystis sp. (strain ATCC 27184 / PCC 6803 / Kazusa).